The following is a 112-amino-acid chain: Large ribosomal subunit protein uL22 (112 aa).

It belongs to the universal ribosomal protein uL22 family. Part of the 50S ribosomal subunit.

This protein binds specifically to 23S rRNA; its binding is stimulated by other ribosomal proteins, e.g. L4, L17, and L20. It is important during the early stages of 50S assembly. It makes multiple contacts with different domains of the 23S rRNA in the assembled 50S subunit and ribosome. Functionally, the globular domain of the protein is located near the polypeptide exit tunnel on the outside of the subunit, while an extended beta-hairpin is found that lines the wall of the exit tunnel in the center of the 70S ribosome. This chain is Large ribosomal subunit protein uL22, found in Nitratidesulfovibrio vulgaris (strain DSM 19637 / Miyazaki F) (Desulfovibrio vulgaris).